Consider the following 207-residue polypeptide: Ras-related protein Rab-2A (207 aa).

GTP is bound at residue 12 to 20; the sequence is GDTGVGKSC. An Effector region motif is present at residues 34-42; that stretch reads HDLTIGVEF. GTP contacts are provided by residues 60 to 64, 118 to 121, and 148 to 150; these read DTAGQ, NKSD, and SAK. The disordered stretch occupies residues 187–207; the sequence is GAPTSKQDGTDQKPAGGGCCK. 2 S-geranylgeranyl cysteine lipidation sites follow: cysteine 205 and cysteine 206.

This sequence belongs to the small GTPase superfamily. Rab family.

The protein localises to the cell membrane. The catalysed reaction is GTP + H2O = GDP + phosphate + H(+). Its activity is regulated as follows. Regulated by guanine nucleotide exchange factors (GEFs) which promote the exchange of bound GDP for free GTP, GTPase activating proteins (GAPs) which increase the GTP hydrolysis activity, and GDP dissociation inhibitors which inhibit the dissociation of the nucleotide from the GTPase. Its function is as follows. The small GTPases Rab are key regulators of intracellular membrane trafficking, from the formation of transport vesicles to their fusion with membranes. Rabs cycle between active GTP-bound and inactive GDP-bound states. In their active state, drive transport of vesicular carriers from donor organelles to acceptor organelles to regulate the membrane traffic that maintains organelle identity and morphology. This chain is Ras-related protein Rab-2A (rab2A), found in Dictyostelium discoideum (Social amoeba).